The sequence spans 463 residues: Succinate--CoA ligase [ADP-forming] subunit beta, mitochondrial (463 aa).

Residues 1–53 (MAASVFYGRLLAVATLRNHRPRTALGAAAQVLGSSGLFNNHGLQVQQQQQRNL) constitute a mitochondrion transit peptide. An ATP-grasp domain is found at 61–288 (MELLQEAGVS…SNSAYRQKKI (228 aa)). K78 is modified (N6-acetyllysine). Y84 carries the phosphotyrosine modification. The residue at position 88 (K88) is an N6-acetyllysine; alternate. K88 bears the N6-succinyllysine; alternate mark. Residues K98 and 105–107 (GRG) each bind ATP. N6-acetyllysine is present on residues K129, K139, K143, and K216. Mg(2+)-binding residues include N258 and D272. Residue S279 is modified to Phosphoserine. N323 serves as a coordination point for substrate. Residue T341 is modified to Phosphothreonine. Position 368 is an N6-acetyllysine (K368). Substrate is bound at residue 380–382 (GIM).

The protein belongs to the succinate/malate CoA ligase beta subunit family. ATP-specific subunit beta subfamily. In terms of assembly, heterodimer of an alpha and a beta subunit. The beta subunit determines specificity for ATP. Interacts with ALAS2. Requires Mg(2+) as cofactor.

The protein localises to the mitochondrion. It catalyses the reaction succinate + ATP + CoA = succinyl-CoA + ADP + phosphate. It participates in carbohydrate metabolism; tricarboxylic acid cycle; succinate from succinyl-CoA (ligase route): step 1/1. Its function is as follows. ATP-specific succinyl-CoA synthetase functions in the citric acid cycle (TCA), coupling the hydrolysis of succinyl-CoA to the synthesis of ATP and thus represents the only step of substrate-level phosphorylation in the TCA. The beta subunit provides nucleotide specificity of the enzyme and binds the substrate succinate, while the binding sites for coenzyme A and phosphate are found in the alpha subunit. This Macaca fascicularis (Crab-eating macaque) protein is Succinate--CoA ligase [ADP-forming] subunit beta, mitochondrial.